Reading from the N-terminus, the 534-residue chain is Phosphoenolpyruvate carboxykinase (ATP) (534 aa).

Substrate contacts are provided by arginine 59, tyrosine 200, and lysine 206. ATP-binding positions include lysine 206, histidine 225, and glycine 242–threonine 250. The Mn(2+) site is built by lysine 206 and histidine 225. Mn(2+) is bound at residue aspartate 263. Residues glutamate 291, arginine 327, arginine 443–isoleucine 444, and threonine 449 each bind ATP. Arginine 327 is a substrate binding site.

Belongs to the phosphoenolpyruvate carboxykinase (ATP) family. Mn(2+) serves as cofactor.

The protein localises to the cytoplasm. The enzyme catalyses oxaloacetate + ATP = phosphoenolpyruvate + ADP + CO2. It participates in carbohydrate biosynthesis; gluconeogenesis. Functionally, involved in the gluconeogenesis. Catalyzes the conversion of oxaloacetate (OAA) to phosphoenolpyruvate (PEP) through direct phosphoryl transfer between the nucleoside triphosphate and OAA. The protein is Phosphoenolpyruvate carboxykinase (ATP) of Lachnospira eligens (strain ATCC 27750 / DSM 3376 / VPI C15-48 / C15-B4) (Eubacterium eligens).